The following is a 188-amino-acid chain: MVDNMFIVFEGIDGSGKTTQSKLLAKKMDAFWTYEPSNSLVGKIIREILSGKTEVDNKTLALLFAADRIEHTKLIKEELKKRDVVCDRYLYSSIAYQSVAGVDENFIKSINRYALKPDIVFLLIVDIETALKRVKTKDIFEKKDFLKKVQDKYLELAEEYNFIVIDTTKKSVEEVHNEIIGYLKNIPH.

11–18 (GIDGSGKT) is a binding site for ATP.

Belongs to the thymidylate kinase family.

The catalysed reaction is dTMP + ATP = dTDP + ADP. This is Probable thymidylate kinase (tmk) from Methanocaldococcus jannaschii (strain ATCC 43067 / DSM 2661 / JAL-1 / JCM 10045 / NBRC 100440) (Methanococcus jannaschii).